A 288-amino-acid chain; its full sequence is UDP-3-O-acyl-N-acetylglucosamine deacetylase (288 aa).

3 residues coordinate Zn(2+): His-79, His-236, and Asp-240. His-263 (proton donor) is an active-site residue.

It belongs to the LpxC family. Zn(2+) is required as a cofactor.

The enzyme catalyses a UDP-3-O-[(3R)-3-hydroxyacyl]-N-acetyl-alpha-D-glucosamine + H2O = a UDP-3-O-[(3R)-3-hydroxyacyl]-alpha-D-glucosamine + acetate. It functions in the pathway glycolipid biosynthesis; lipid IV(A) biosynthesis; lipid IV(A) from (3R)-3-hydroxytetradecanoyl-[acyl-carrier-protein] and UDP-N-acetyl-alpha-D-glucosamine: step 2/6. Its function is as follows. Catalyzes the hydrolysis of UDP-3-O-myristoyl-N-acetylglucosamine to form UDP-3-O-myristoylglucosamine and acetate, the committed step in lipid A biosynthesis. The polypeptide is UDP-3-O-acyl-N-acetylglucosamine deacetylase (Rickettsia bellii (strain OSU 85-389)).